The sequence spans 198 residues: Recombination protein RecR (198 aa).

Residues 57–72 (CSVCGHITENDPCYIC) form a C4-type zinc finger. Positions 80–175 (SVICVVEDDK…KVTRLAQGLS (96 aa)) constitute a Toprim domain.

It belongs to the RecR family.

Its function is as follows. May play a role in DNA repair. It seems to be involved in an RecBC-independent recombinational process of DNA repair. It may act with RecF and RecO. The sequence is that of Recombination protein RecR from Staphylococcus aureus (strain MRSA252).